Consider the following 523-residue polypeptide: Flavin-dependent halogenase armH5 (523 aa).

FAD-binding residues include Gly17, Ala20, and Glu50. Residues Ser328 and Gly329 each contribute to the chloride site. FAD is bound at residue Val330.

The protein belongs to the flavin-dependent halogenase family.

It catalyses the reaction melleolide F + FADH2 + chloride + O2 = 6'-chloromelleolide F + FAD + 2 H2O + H(+). Functionally, flavin-dependent halogenase involved in the biosynthesis of melleolides, a range of antifungal and phytotoxic polyketide derivatives composed of an orsellinic acid (OA) moiety esterified to various sesquiterpene alcohols. The halogenase catalyzes the transfer of a single chlorine atom to the melleolide backbone, resulting in a 6'-chloromelleolide product. The enzyme acts on free substrate and does not depend on carrier-protein-dependent acceptor molecules. The protein is Flavin-dependent halogenase armH5 of Armillaria mellea (Honey mushroom).